The sequence spans 367 residues: Alanine racemase (367 aa).

The active-site Proton acceptor; specific for D-alanine is Lys-35. The residue at position 35 (Lys-35) is an N6-(pyridoxal phosphate)lysine. Substrate is bound at residue Arg-130. Tyr-259 serves as the catalytic Proton acceptor; specific for L-alanine. Substrate is bound at residue Met-307.

This sequence belongs to the alanine racemase family. Pyridoxal 5'-phosphate is required as a cofactor.

The enzyme catalyses L-alanine = D-alanine. Its pathway is amino-acid biosynthesis; D-alanine biosynthesis; D-alanine from L-alanine: step 1/1. In terms of biological role, catalyzes the interconversion of L-alanine and D-alanine. May also act on other amino acids. The chain is Alanine racemase (alr) from Delftia acidovorans (strain DSM 14801 / SPH-1).